The sequence spans 762 residues: Endothelin-converting enzyme 1 (762 aa).

Residues 1–60 (MGSLRPPQGLGLQWSSFFLGKKGPGLTVSLPLLASSLQVNFRSPRSGQRCWAARTSVEKR) are Cytoplasmic-facing. Residues 61-81 (LVVLVTLLAAGLVACLAALGI) form a helical; Signal-anchor for type II membrane protein membrane-spanning segment. The Extracellular segment spans residues 82–762 (QYRTRTPPVC…MNPRHKCEVW (681 aa)). In terms of domain architecture, Peptidase M13 spans 90–762 (VCLTEACVSV…MNPRHKCEVW (673 aa)). 5 disulfides stabilise this stretch: cysteine 91-cysteine 96, cysteine 114-cysteine 747, cysteine 122-cysteine 707, cysteine 177-cysteine 427, and cysteine 636-cysteine 759. Asparagine 158, asparagine 179, asparagine 202, asparagine 262, asparagine 308, asparagine 354, asparagine 375, and asparagine 531 each carry an N-linked (GlcNAc...) asparagine glycan. Histidine 599 is a binding site for Zn(2+). The active site involves glutamate 600. A Zn(2+)-binding site is contributed by histidine 603. 2 N-linked (GlcNAc...) asparagine glycosylation sites follow: asparagine 624 and asparagine 643. Glutamate 659 is a binding site for Zn(2+). The Proton donor role is filled by aspartate 663.

Belongs to the peptidase M13 family. As to quaternary structure, homodimer; disulfide-linked. Interacts with PPP1R16B. Interacts with TSPAN8; this interaction recruits the endothelin converting enzyme ECE1 to tetraspanin-enriched microdomains and positively modulates its enzymatic activity. The cofactor is Zn(2+). All isoforms are expressed in aortic endothelial cells. Isoform A is also expressed in liver; isoform B in smooth muscle cells and fibroblasts; isoform C in aortic endothelial cells, smooth muscle cells, fibroblasts, liver and lung, and isoform D in smooth muscle cells.

It is found in the cell membrane. The catalysed reaction is Hydrolysis of the 21-Trp-|-Val-22 bond in big endothelin to form endothelin 1.. Its activity is regulated as follows. Inhibited by phosphoramidon. Its function is as follows. Converts big endothelin-1 to endothelin-1. The protein is Endothelin-converting enzyme 1 (Ece1) of Rattus norvegicus (Rat).